We begin with the raw amino-acid sequence, 1059 residues long: Zinc finger protein 658 (1059 aa).

Residues 8–79 (VSFQDVTVEF…EDEFLNQRYP (72 aa)) form the KRAB domain. A Glycyl lysine isopeptide (Lys-Gly) (interchain with G-Cter in SUMO2) cross-link involves residue K178. Residues 325–347 (FESNKCEENFSQSSAHIVHQKTQ) form a C2H2-type 1; degenerate zinc finger. The C2H2-type 2; degenerate zinc-finger motif lies at 352–375 (FGEHNECTDALYQKLDFTAHQRIH). The C2H2-type 3; degenerate zinc finger occupies 381–406 (YLSDEHGKCRKSFYRKAHLIQHQRPH). The segment at 412-434 (YQYEECAKSFCSSSHPIQHPGTY) adopts a C2H2-type 4; degenerate zinc-finger fold. 14 C2H2-type zinc fingers span residues 440–462 (YECN…LRIH), 518–540 (YECI…QRIH), 546–568 (YECV…QRVH), 574–596 (YECN…QRIH), 602–624 (YECS…HRIH), 630–652 (YECN…QRIH), 658–680 (YECN…QRIH), 686–708 (YECS…QRIH), 714–736 (YECN…QNIH), 742–764 (YECS…RRIH), 770–792 (YECS…ERIH), 798–820 (YECN…QRIH), 826–848 (YECN…QRIH), and 854–876 (YECN…HRIH). The C2H2-type 19; degenerate zinc-finger motif lies at 882-904 (YECNDCGKTFSKTSHLRAHLRTR). 5 C2H2-type zinc fingers span residues 910 to 932 (YECS…QRVH), 938 to 960 (YECN…QRIH), 966 to 988 (YECN…QRIH), 994 to 1016 (YECN…QRIH), and 1022 to 1045 (YECD…TRMH).

It belongs to the krueppel C2H2-type zinc-finger protein family.

It is found in the nucleus. Its function is as follows. Mediates transcriptional repression in response to zinc. Represses several genes, including SLC30A5, SLC30A10 and CBWD1, by binding to the zinc transcriptional regulatory element (ZTRE) (5'-C[AC]C[TAG]CC[TC]-N(0-50)-[GA]G[ATC]G[TG]G-3') found in the promoter region. May play a role in the control of ribosome biogenesis, regulating predominantly rRNA levels, as well as those of several ribosomal proteins, thus coordinating this highly zinc-demanding process with the available zinc supply. The sequence is that of Zinc finger protein 658 (ZNF658) from Homo sapiens (Human).